Consider the following 240-residue polypeptide: Ribonuclease T2 (240 aa).

Positions 1–19 are cleaved as a signal peptide; sequence MRFIAFAVIFSAVYLCSSA. A disulfide bond links Cys-41 and Cys-46. The active site involves His-56. Cystine bridges form between Cys-66-Cys-110, Cys-173-Cys-227, and Cys-191-Cys-201. Asn-67 and Asn-73 each carry an N-linked (GlcNAc...) asparagine glycan. Residues Glu-103 and His-107 contribute to the active site.

Belongs to the RNase T2 family. In terms of tissue distribution, ubiquitous.

Its subcellular location is the lysosome lumen. The protein resides in the endoplasmic reticulum lumen. The protein localises to the secreted. The enzyme catalyses a ribonucleotidyl-ribonucleotide-RNA + H2O = a 3'-end 3'-phospho-ribonucleotide-RNA + a 5'-end dephospho-ribonucleoside-RNA + H(+). Has ribonuclease activity, with higher activity at acidic pH. Probably is involved in lysosomal degradation of ribosomal RNA. In Danio rerio (Zebrafish), this protein is Ribonuclease T2 (rnaset2).